The sequence spans 548 residues: LDL receptor repeat-containing protein egg-2 (548 aa).

Over 1 to 49 (MSQQAGNAQRGRFDEEPMSLGEKISHRMDQLKEIVSSSCPCAGKFPPVA) the chain is Cytoplasmic. The chain crosses the membrane as a helical; Signal-anchor for type II membrane protein span at residues 50-70 (IVLIVALIILGVIIAVPLVIF). Residues 71 to 548 (LSPSAQAMSS…LALKNSGLRP (478 aa)) are Extracellular-facing. N119 carries N-linked (GlcNAc...) asparagine glycosylation. 8 LDL-receptor class A domains span residues 122-160 (TCSG…ENCK), 161-213 (ECQS…ASCR), 215-252 (KCSK…SNCN), 253-288 (KCQK…HQCD), 291-328 (TCSG…ENCP), 370-412 (KCDP…KKCT), 416-454 (ECVV…KGCD), and 455-492 (KCPS…HKCS). Cystine bridges form between C130–C150, C144–C159, C162–C190, C168–C203, C197–C212, C216–C229, C223–C242, C236–C251, C254–C265, C261–C278, C272–C287, C292–C305, C300–C318, C312–C327, C371–C389, C379–C402, C396–C411, C417–C431, C427–C444, C438–C453, C456–C469, C463–C482, and C476–C491. An N-linked (GlcNAc...) asparagine glycan is attached at N244. An N-linked (GlcNAc...) asparagine glycan is attached at N527.

It localises to the cell membrane. It is found in the endosome membrane. Probable receptor which is required for the oocyte-to-zygote transition although its exact function is controversial. Redundantly with egg-1, seems to be required for fertilization probably by promoting the interaction or fusion between sperm and oocyte. Conversely, shown to be dispensable for fertilization but required together with egg-1 for the formation of a continuous and cohesive eggshell chitin layer by maintaining a homogenous distribution of chitin synthase chs-1 at the unfertilized oocyte cell membrane. Appears to recruit or maintain together to the unfertilized oocyte cortex several proteins including chs-1, kinase mbk-2 and pseudophosphatase egg-3, and possibly egg-4 and egg-5. The sequence is that of LDL receptor repeat-containing protein egg-2 from Caenorhabditis elegans.